The primary structure comprises 492 residues: Pre-mRNA-splicing factor sap61 (492 aa).

The C2H2-type zinc-finger motif lies at 243-267 (FYCEVCQKFFGKITVFEAHKKSKAH). 2 disordered regions span residues 268 to 291 (NKAV…KQKG) and 337 to 365 (AAER…QDDE). Positions 276-286 (SSSPSTTSNTN) are enriched in low complexity. Positions 345 to 354 (QSTPSVSVEG) are enriched in polar residues. The segment covering 355–365 (NQDEESDQDDE) has biased composition (acidic residues). S360 carries the post-translational modification Phosphoserine. Residues 397 to 428 (FPCEICGNYVYMGRKAFDKHFTEQRHIYGLKC) form a Matrin-type zinc finger.

This sequence belongs to the SF3A3 family. Belongs to the 40S cdc5-associated complex (or cwf complex), a spliceosome sub-complex reminiscent of a late-stage spliceosome composed of the U2, U5 and U6 snRNAs and at least brr2, cdc5, cwf2/prp3, cwf3/syf1, cwf4/syf3, cwf5/ecm2, spp42/cwf6, cwf7/spf27, cwf8, cwf9, cwf10, cwf11, cwf12, prp45/cwf13, cwf14, cwf15, cwf16, cwf17, cwf18, cwf19, cwf20, cwf21, cwf22, cwf23, cwf24, cwf25, cwf26, cyp7/cwf27, cwf28, cwf29/ist3, lea1, msl1, prp5/cwf1, prp10, prp12/sap130, prp17, prp22, sap61, sap62, sap114, sap145, slu7, smb1, smd1, smd3, smf1, smg1 and syf2.

It localises to the nucleus. The protein resides in the cytoplasm. Involved in mRNA splicing where it associates with cdc5 and the other cwf proteins as part of the spliceosome. In Schizosaccharomyces pombe (strain 972 / ATCC 24843) (Fission yeast), this protein is Pre-mRNA-splicing factor sap61 (sap61).